The primary structure comprises 115 residues: Envelope glycoprotein N (115 aa).

Positions 1 to 27 (MWLLRPAGSNFIVALIVLACAGPLTCS) are cleaved as a signal peptide. The Virion surface portion of the chain corresponds to 28 to 77 (AQLDAGILNPWGSAGHNDAVMPGMFANSESDERFYSPHCSSRGLPLVNES). The chain crosses the membrane as a helical span at residues 78–98 (MASVIFFLSLAMVCVAIVAIL). At 99-115 (YNCCFNSFKNSVINSRW) the chain is on the intravirion side.

The protein belongs to the herpesviridae glycoprotein N family. Interacts (via N-terminus) with gM (via N-terminus). The gM-gN heterodimer forms the gCII complex.

The protein localises to the virion membrane. It is found in the host membrane. The protein resides in the host Golgi apparatus. It localises to the host trans-Golgi network. Functionally, envelope glycoprotein necessary for proper maturation of gM and modulation of its membrane fusion activity. Also plays a critical role in virion morphogenesis. The chain is Envelope glycoprotein N from Psittacid herpesvirus 1 (isolate Amazon parrot/-/97-0001/1997) (PsHV-1).